A 331-amino-acid chain; its full sequence is ADP-L-glycero-D-manno-heptose-6-epimerase (331 aa).

Residues 11–12, 32–33, lysine 39, lysine 54, 75–79, and asparagine 92 contribute to the NADP(+) site; these read FI, DN, and EGACS. Tyrosine 139 (proton acceptor) is an active-site residue. Lysine 143 is an NADP(+) binding site. Asparagine 168 provides a ligand contact to substrate. The NADP(+) site is built by valine 169 and lysine 177. Catalysis depends on lysine 177, which acts as the Proton acceptor. Residues arginine 179, histidine 186, 200–203, arginine 213, and tyrosine 292 each bind substrate; that span reads FGEY.

Belongs to the NAD(P)-dependent epimerase/dehydratase family. HldD subfamily. In terms of assembly, homopentamer. NADP(+) serves as cofactor.

It catalyses the reaction ADP-D-glycero-beta-D-manno-heptose = ADP-L-glycero-beta-D-manno-heptose. The protein operates within nucleotide-sugar biosynthesis; ADP-L-glycero-beta-D-manno-heptose biosynthesis; ADP-L-glycero-beta-D-manno-heptose from D-glycero-beta-D-manno-heptose 7-phosphate: step 4/4. In terms of biological role, catalyzes the interconversion between ADP-D-glycero-beta-D-manno-heptose and ADP-L-glycero-beta-D-manno-heptose via an epimerization at carbon 6 of the heptose. The sequence is that of ADP-L-glycero-D-manno-heptose-6-epimerase from Cupriavidus taiwanensis (strain DSM 17343 / BCRC 17206 / CCUG 44338 / CIP 107171 / LMG 19424 / R1) (Ralstonia taiwanensis (strain LMG 19424)).